The sequence spans 234 residues: Ubiquinone biosynthesis O-methyltransferase (234 aa).

4 residues coordinate S-adenosyl-L-methionine: arginine 39, glycine 59, aspartate 80, and methionine 124.

This sequence belongs to the methyltransferase superfamily. UbiG/COQ3 family.

It catalyses the reaction a 3-demethylubiquinol + S-adenosyl-L-methionine = a ubiquinol + S-adenosyl-L-homocysteine + H(+). It carries out the reaction a 3-(all-trans-polyprenyl)benzene-1,2-diol + S-adenosyl-L-methionine = a 2-methoxy-6-(all-trans-polyprenyl)phenol + S-adenosyl-L-homocysteine + H(+). Its pathway is cofactor biosynthesis; ubiquinone biosynthesis. O-methyltransferase that catalyzes the 2 O-methylation steps in the ubiquinone biosynthetic pathway. The protein is Ubiquinone biosynthesis O-methyltransferase of Aliivibrio fischeri (strain MJ11) (Vibrio fischeri).